We begin with the raw amino-acid sequence, 285 residues long: Aldo-keto reductase (285 aa).

165–175 (APLAGGILTGK) lines the NADP(+) pocket.

The protein belongs to the aldo/keto reductase family. Aldo/keto reductase 2 subfamily.

This is Aldo-keto reductase from Babesia bovis.